A 732-amino-acid chain; its full sequence is MYPADLLASPDLLEPLRFQTRGGVTVTRRATALDPRTALDPVIDALDRRRGLLLSSGVEAPGRYRRHALGFTDPAVALTARGRTLRIDALNGRGQVLLPAVAEALRGLEALAGLEEAPSRVTASSASPAPLPGEERSRQPSVFSVLRAVLDLFAAPDDPLLGLYGAFAYDLAFQFEPIRQRLERPDDQRDLLLYLPDRLVALDPIAGLARLVAYEFITAAGSTEGLECGGRDHPYRPDTNAEAGCDHAPGDYQRVVESAKAAFRRGDLFEVVPGQTFAEPCADAPSSVFRRLRAANPAPYEAFVNLGRGEFLVAASPEMYVRVAGGRVETCPISGTVARGADALGDAAQVLRLLTSAKDAAELTMCTDVDRNDKARVCEPGSVRVIGRRMIELYSRLIHTVDHVEGRLRSGMDALDAFLTHSWAVTVTGAPKRWAMQFLEDTEQSPRRWYGGAFGRLGFDGGMDTGLTLRTIRMAEGVAYVRAGATLLSDSDPDAEDAECRLKAAAFRDAIRGTAAGAAPTLPAAPRGGEGRRVLLVDHDDSFVHTLADYLRQTGASVTTLRHSHARAALAERRPDLVVLSPGPGRPADFDVAGTIDAALALGLPVFGVCLGLQGMVERFGGALDVLPEPVHGKATEVRVLGGALFAGLPERLTVGRYHSLVARRDRLPADLTVTAETADGLVMAVEHRRLPLAAVQFHPESILSLDGGAGLALLGNVMDRLAAGALTDAAA.

Residues 533–728 (RVLLVDHDDS…MDRLAAGALT (196 aa)) enclose the Glutamine amidotransferase type-1 domain. 583-585 (GPG) is a binding site for L-glutamine. The active-site Nucleophile; for GATase activity is Cys610. Residues Gln614 and 660 to 661 (SL) each bind L-glutamine. Residues His699 and Glu701 each act as for GATase activity in the active site.

The enzyme catalyses chorismate + L-glutamine = anthranilate + pyruvate + L-glutamate + H(+). It functions in the pathway amino-acid biosynthesis; L-tryptophan biosynthesis; L-tryptophan from chorismate: step 1/5. The protein is Anthranilate synthase (trpE(G)) of Azospirillum brasilense.